The primary structure comprises 533 residues: Peptide chain release factor 3 (533 aa).

A tr-type G domain is found at 10–278; that stretch reads EKRRTFAIIS…TFVEIAPPPQ (269 aa). Residues 19 to 26, 87 to 91, and 141 to 144 contribute to the GTP site; these read SHPDAGKT, DTPGH, and NKMD.

This sequence belongs to the TRAFAC class translation factor GTPase superfamily. Classic translation factor GTPase family. PrfC subfamily.

The protein localises to the cytoplasm. Functionally, increases the formation of ribosomal termination complexes and stimulates activities of RF-1 and RF-2. It binds guanine nucleotides and has strong preference for UGA stop codons. It may interact directly with the ribosome. The stimulation of RF-1 and RF-2 is significantly reduced by GTP and GDP, but not by GMP. The protein is Peptide chain release factor 3 of Salinibacter ruber (strain DSM 13855 / M31).